The following is a 281-amino-acid chain: Pantothenate synthetase (281 aa).

M30–H37 contributes to the ATP binding site. The Proton donor role is filled by H37. Q61 contributes to the (R)-pantoate binding site. Q61 is a beta-alanine binding site. G147–D150 lines the ATP pocket. Q153 serves as a coordination point for (R)-pantoate. ATP-binding positions include I176 and K184 to R187.

This sequence belongs to the pantothenate synthetase family. Homodimer.

Its subcellular location is the cytoplasm. The enzyme catalyses (R)-pantoate + beta-alanine + ATP = (R)-pantothenate + AMP + diphosphate + H(+). It functions in the pathway cofactor biosynthesis; (R)-pantothenate biosynthesis; (R)-pantothenate from (R)-pantoate and beta-alanine: step 1/1. Catalyzes the condensation of pantoate with beta-alanine in an ATP-dependent reaction via a pantoyl-adenylate intermediate. In Clostridium botulinum (strain Langeland / NCTC 10281 / Type F), this protein is Pantothenate synthetase.